We begin with the raw amino-acid sequence, 229 residues long: 23 kDa piroplasm membrane protein (229 aa).

The first 19 residues, 1–19 (MNKYFKVFFFVLLTHALKS), serve as a signal peptide directing secretion. Topologically, residues 20 to 203 (ALIFGQATLQ…EKEDTNKKKY (184 aa)) are extracellular. Residues 204–224 (VLMVVVVVVFVVVASLVVFLV) form a helical membrane-spanning segment. The Cytoplasmic segment spans residues 225–229 (KFCLK).

It is found in the membrane. This is 23 kDa piroplasm membrane protein from Theileria parva (East coast fever infection agent).